Consider the following 65-residue polypeptide: NADH dehydrogenase [ubiquinone] 1 alpha subcomplex subunit 1 (65 aa).

A helical transmembrane segment spans residues 3–23; it reads LVWLEAMLPLGIIGGMLCIMG.

This sequence belongs to the complex I NDUFA1 subunit family. Complex I is composed of at least 49 different subunits.

It localises to the mitochondrion inner membrane. Accessory subunit of the mitochondrial membrane respiratory chain NADH dehydrogenase (Complex I), that is believed not to be involved in catalysis. Complex I functions in the transfer of electrons from NADH to the respiratory chain. The immediate electron acceptor for the enzyme is believed to be ubiquinone. This Arabidopsis thaliana (Mouse-ear cress) protein is NADH dehydrogenase [ubiquinone] 1 alpha subcomplex subunit 1.